The chain runs to 106 residues: uncharacterized protein (106 aa).

Belongs to the HesB/IscA family.

This is an uncharacterized protein from Cereibacter sphaeroides (Rhodobacter sphaeroides).